Here is a 200-residue protein sequence, read N- to C-terminus: WASH complex subunit 3 (200 aa).

Residues 56–76 (SLRIQQIETTLSILEAKLASI) are a coiled coil. 2 disordered regions span residues 87-130 (VRAP…AENI) and 165-200 (DPNLLDTPDAAVPDASKKRLEEQDDDSSGSESSFSD).

The protein belongs to the CCDC53 family. In terms of assembly, component of the WASH complex.

The protein is WASH complex subunit 3 of Danio rerio (Zebrafish).